The following is a 166-amino-acid chain: Large ribosomal subunit protein uL10 (166 aa).

It belongs to the universal ribosomal protein uL10 family. Part of the ribosomal stalk of the 50S ribosomal subunit. The N-terminus interacts with L11 and the large rRNA to form the base of the stalk. The C-terminus forms an elongated spine to which L12 dimers bind in a sequential fashion forming a multimeric L10(L12)X complex.

Forms part of the ribosomal stalk, playing a central role in the interaction of the ribosome with GTP-bound translation factors. This chain is Large ribosomal subunit protein uL10, found in Staphylococcus epidermidis (strain ATCC 35984 / DSM 28319 / BCRC 17069 / CCUG 31568 / BM 3577 / RP62A).